The sequence spans 689 residues: Glycine--tRNA ligase beta subunit (689 aa).

Belongs to the class-II aminoacyl-tRNA synthetase family. In terms of assembly, tetramer of two alpha and two beta subunits.

Its subcellular location is the cytoplasm. The enzyme catalyses tRNA(Gly) + glycine + ATP = glycyl-tRNA(Gly) + AMP + diphosphate. The protein is Glycine--tRNA ligase beta subunit of Pectobacterium carotovorum subsp. carotovorum (strain PC1).